The following is a 206-amino-acid chain: dITP/XTP pyrophosphatase (206 aa).

7–12 (SNNAKK) serves as a coordination point for substrate. The active-site Proton acceptor is the Asp72. Asp72 contacts Mg(2+). Substrate contacts are provided by residues Ser73, 155 to 158 (FGYD), Lys182, and 187 to 188 (HR).

It belongs to the HAM1 NTPase family. Homodimer. The cofactor is Mg(2+).

The catalysed reaction is XTP + H2O = XMP + diphosphate + H(+). It catalyses the reaction dITP + H2O = dIMP + diphosphate + H(+). It carries out the reaction ITP + H2O = IMP + diphosphate + H(+). Functionally, pyrophosphatase that catalyzes the hydrolysis of nucleoside triphosphates to their monophosphate derivatives, with a high preference for the non-canonical purine nucleotides XTP (xanthosine triphosphate), dITP (deoxyinosine triphosphate) and ITP. Seems to function as a house-cleaning enzyme that removes non-canonical purine nucleotides from the nucleotide pool, thus preventing their incorporation into DNA/RNA and avoiding chromosomal lesions. The sequence is that of dITP/XTP pyrophosphatase from Corynebacterium glutamicum (strain R).